A 200-amino-acid chain; its full sequence is Inner membrane-spanning protein YciB (200 aa).

Transmembrane regions (helical) follow at residues 32–52 (FVATGAFMVAIVAAVIVSYVV), 56–76 (VPLMALVTAVIVLVFGGLTLV), 93–113 (LFAVTLYVGLMLGRSFIAILF), 126–146 (FLTIRWARFFLFMAVLNEVIW), and 153–173 (FWVAFKAFGVIPLTAVFAMTQ).

The protein belongs to the YciB family.

Its subcellular location is the cell inner membrane. In terms of biological role, plays a role in cell envelope biogenesis, maintenance of cell envelope integrity and membrane homeostasis. The chain is Inner membrane-spanning protein YciB from Afipia carboxidovorans (strain ATCC 49405 / DSM 1227 / KCTC 32145 / OM5) (Oligotropha carboxidovorans).